An 822-amino-acid chain; its full sequence is Pentatricopeptide repeat-containing protein At2g41720 (822 aa).

The segment at 1 to 28 (MATVTNFKLVTPPESSRADKPGATKASD) is disordered. PPR repeat units lie at residues 106-136 (ARKNFPVLIRELSRRGCIELCVNVFKWMKIQ), 142-176 (RNDIYNMMIRLHARHNWVDQARGLFFEMQKWSCKP), 177-211 (DAETYDALINAHGRAGQWRWAMNLMDDMLRAAIAP), 212-246 (SRSTYNNLINACGSSGNWREALEVCKKMTDNGVGP), 247-281 (DLVTHNIVLSAYKSGRQYSKALSYFELMKGAKVRP), 282-316 (DTTTFNIIIYCLSKLGQSSQALDLFNSMREKRAEC), 319-353 (DVVTFTSIMHLYSVKGEIENCRAVFEAMVAEGLKP), 354-388 (NIVSYNALMGAYAVHGMSGTALSVLGDIKQNGIIP), 389-423 (DVVSYTCLLNSYGRSRQPGKAKEVFLMMRKERRKP), 424-458 (NVVTYNALIDAYGSNGFLAEAVEIFRQMEQDGIKP), 459-493 (NVVSVCTLLAACSRSKKKVNVDTVLSAAQSRGINL), 494-528 (NTAAYNSAIGSYINAAELEKAIALYQSMRKKKVKA), 529-563 (DSVTFTILISGSCRMSKYPEAISYLKEMEDLSIPL), 564-598 (TKEVYSSVLCAYSKQGQVTEAESIFNQMKMAGCEP), 599-633 (DVIAYTSMLHAYNASEKWGKACELFLEMEANGIEP), 634-668 (DSIACSALMRAFNKGGQPSNVFVLMDLMREKEIPF), 669-699 (TGAVFFEIFSACNTLQEWKRAIDLIQMMDPY), 704-738 (SIGLTNQMLHLFGKSGKVEAMMKLFYKIIASGVGI), and 739-773 (NLKTYAILLEHLLAVGNWRKYIEVLEWMSGAGIQP).

Belongs to the PPR family. P subfamily.

The chain is Pentatricopeptide repeat-containing protein At2g41720 (EMB2654) from Arabidopsis thaliana (Mouse-ear cress).